We begin with the raw amino-acid sequence, 46 residues long: Esculentin-1a/b (46 aa).

Cysteines 40 and 46 form a disulfide.

Belongs to the frog skin active peptide (FSAP) family. Esculentin subfamily. In terms of tissue distribution, expressed by the skin glands.

The protein resides in the secreted. Functionally, antimicrobial peptide. Stimulates insulin secretion by BRIN-BD11 cells in vitro. Shows hemolytic activity. This chain is Esculentin-1a/b, found in Pelophylax ridibundus (Marsh frog).